We begin with the raw amino-acid sequence, 220 residues long: Cytidylate kinase (220 aa).

Gly-9–Thr-17 is a binding site for ATP.

Belongs to the cytidylate kinase family. Type 1 subfamily.

Its subcellular location is the cytoplasm. It carries out the reaction CMP + ATP = CDP + ADP. The enzyme catalyses dCMP + ATP = dCDP + ADP. The protein is Cytidylate kinase of Thermotoga neapolitana (strain ATCC 49049 / DSM 4359 / NBRC 107923 / NS-E).